The sequence spans 442 residues: C4-dicarboxylate transport protein (442 aa).

A run of 8 helical transmembrane segments spans residues 10–30, 40–60, 77–97, 149–169, 185–205, 221–241, 288–308, and 354–374; these read VQVL…PSFG, FIKL…VSGI, LIYF…VANI, LLQV…LGTL, FVIL…AMAF, LMVA…GLIA, VVGL…SIYL, and AATL…ILGI. The segment at 420–442 is disordered; the sequence is PATPEVAAEERGEGRGLDGPLPA.

It belongs to the dicarboxylate/amino acid:cation symporter (DAACS) (TC 2.A.23) family.

It localises to the cell membrane. Its function is as follows. Responsible for the transport of dicarboxylates such as succinate, fumarate, and malate across the membrane. This is C4-dicarboxylate transport protein from Deinococcus geothermalis (strain DSM 11300 / CIP 105573 / AG-3a).